The chain runs to 465 residues: Lactaldehyde dehydrogenase (465 aa).

Gly220–Gly225 contacts NAD(+). Catalysis depends on residues Glu240 and Cys274.

It belongs to the aldehyde dehydrogenase family. In terms of assembly, homotetramer.

The enzyme catalyses (S)-lactaldehyde + NAD(+) + H2O = (S)-lactate + NADH + 2 H(+). The protein operates within cofactor biosynthesis; coenzyme F420 biosynthesis. In terms of biological role, involved in F420 biosynthesis through the oxidation of lactaldehyde to lactate. This is Lactaldehyde dehydrogenase from Methanococcus vannielii (strain ATCC 35089 / DSM 1224 / JCM 13029 / OCM 148 / SB).